The primary structure comprises 793 residues: Serine/threonine-protein kinase CLA4 (793 aa).

A disordered region spans residues 8 to 27; sequence RELSESDFQDIGPAPKPPPV. One can recognise a PH domain in the interval 56 to 168; the sequence is QRKKSGWVSY…WLDSIFSKCP (113 aa). Residues 173–186 enclose the CRIB domain; sequence VSSPTNFTHKVHVG. 2 disordered regions span residues 243–369 and 383–476; these read AAAQ…ESPT and QKQL…RPTM. Composition is skewed to polar residues over residues 258–276, 312–337, and 355–369; these read TLSS…STPP, GVTT…QSGP, and LGNS…ESPT. The Protein kinase domain occupies 498–776; it reads FQMIEKAGQG…TEELLHHSFF (279 aa). ATP-binding positions include 504-512 and Lys545; that span reads AGQGASGSV. The Proton acceptor role is filled by Asp644.

It belongs to the protein kinase superfamily. STE Ser/Thr protein kinase family. STE20 subfamily.

The enzyme catalyses L-seryl-[protein] + ATP = O-phospho-L-seryl-[protein] + ADP + H(+). It catalyses the reaction L-threonyl-[protein] + ATP = O-phospho-L-threonyl-[protein] + ADP + H(+). Functionally, required for hyphal maturation and for septation. The protein is Serine/threonine-protein kinase CLA4 (CLA4) of Eremothecium gossypii (strain ATCC 10895 / CBS 109.51 / FGSC 9923 / NRRL Y-1056) (Yeast).